The following is a 654-amino-acid chain: C6 finger domain transcription factor nscR (654 aa).

Positions 17-43 (CELCRERKVKCDKLDPCTNCSSAGVIC) form a DNA-binding region, zn(2)-C6 fungal-type.

The protein resides in the nucleus. Functionally, transcription factor that specifically regulates the neosartoricin B biosynthesis gene cluster. This chain is C6 finger domain transcription factor nscR, found in Trichophyton verrucosum (strain HKI 0517).